A 150-amino-acid chain; its full sequence is Meiotic expression up-regulated protein 15 (150 aa).

This Schizosaccharomyces pombe (strain 972 / ATCC 24843) (Fission yeast) protein is Meiotic expression up-regulated protein 15 (meu15).